The primary structure comprises 354 residues: MKPSPQFFLAAFLSLILQTGICYGIKWIALSKTPSSLALNQTQHCKQLEGLVVSQVQLCRSNLELMQTIIQAAREVIKTCRKTFSDMRWNCSSIELAPNYLLDLERGTRESAFVYALSAAAISHTIARACTTGDLPGCSCGPIPGETPGPGYRWGGCADNLNYGLIMGSKFSDAPMKMKKSGSQANKLMHLHNSEVGRQVLKASLEMKCKCHGVSGSCSIKTCWKGLQELRDIALDLKNKYLSATKVVHRPMGTRKYLVPKDIDIRPVKETELIYLQSSPDFCMKNEKVGSHGTQDRQCNKTSNGSDSCDLMCCGRGYNPYMDKVVERCHCKYHWCCYVTCKKCERTVERYVCK.

An N-terminal signal peptide occupies residues 1-24 (MKPSPQFFLAAFLSLILQTGICYG). 2 N-linked (GlcNAc...) asparagine glycosylation sites follow: N40 and N90. Disulfide bonds link C80/C91, C130/C138, C140/C157, C209/C223, C211/C218, C283/C314, C299/C309, C313/C353, C329/C344, C331/C341, and C336/C337. S215 carries O-palmitoleoyl serine; by PORCN lipidation. N300 and N304 each carry an N-linked (GlcNAc...) asparagine glycan.

It belongs to the Wnt family. In terms of processing, palmitoleoylation is required for efficient binding to frizzled receptors. Depalmitoleoylation leads to Wnt signaling pathway inhibition. Expressed in the dermatome. The expression domain is mutually exclusive to the other Wnt genes.

It is found in the secreted. The protein resides in the extracellular space. It localises to the extracellular matrix. Functionally, ligand for members of the frizzled family of seven transmembrane receptors. May play a role in the formation of dermal structure, both limb and feather buds. Is likely to signal over only few cell diameters. This is Protein Wnt-11 (WNT11) from Gallus gallus (Chicken).